The sequence spans 241 residues: 1-(5-phosphoribosyl)-5-[(5-phosphoribosylamino)methylideneamino] imidazole-4-carboxamide isomerase (241 aa).

Aspartate 10 serves as the catalytic Proton acceptor. Residue aspartate 131 is the Proton donor of the active site.

The protein belongs to the HisA/HisF family.

It is found in the cytoplasm. It carries out the reaction 1-(5-phospho-beta-D-ribosyl)-5-[(5-phospho-beta-D-ribosylamino)methylideneamino]imidazole-4-carboxamide = 5-[(5-phospho-1-deoxy-D-ribulos-1-ylimino)methylamino]-1-(5-phospho-beta-D-ribosyl)imidazole-4-carboxamide. It participates in amino-acid biosynthesis; L-histidine biosynthesis; L-histidine from 5-phospho-alpha-D-ribose 1-diphosphate: step 4/9. This chain is 1-(5-phosphoribosyl)-5-[(5-phosphoribosylamino)methylideneamino] imidazole-4-carboxamide isomerase, found in Bifidobacterium longum (strain DJO10A).